Consider the following 318-residue polypeptide: Transaldolase (318 aa).

Lysine 132 functions as the Schiff-base intermediate with substrate in the catalytic mechanism.

This sequence belongs to the transaldolase family. Type 1 subfamily. Homodimer.

It is found in the cytoplasm. It catalyses the reaction D-sedoheptulose 7-phosphate + D-glyceraldehyde 3-phosphate = D-erythrose 4-phosphate + beta-D-fructose 6-phosphate. Its pathway is carbohydrate degradation; pentose phosphate pathway; D-glyceraldehyde 3-phosphate and beta-D-fructose 6-phosphate from D-ribose 5-phosphate and D-xylulose 5-phosphate (non-oxidative stage): step 2/3. Its function is as follows. Transaldolase is important for the balance of metabolites in the pentose-phosphate pathway. In Shewanella baltica (strain OS185), this protein is Transaldolase.